The primary structure comprises 468 residues: UDP-N-acetylmuramoyl-L-alanine--L-glutamate ligase (468 aa).

122 to 128 (GTKGKST) provides a ligand contact to ATP.

The protein belongs to the MurCDEF family. MurD2 subfamily.

Its subcellular location is the cytoplasm. The enzyme catalyses UDP-N-acetyl-alpha-D-muramoyl-L-alanine + L-glutamate + ATP = UDP-N-acetyl-alpha-D-muramoyl-L-alanyl-L-glutamate + ADP + phosphate + H(+). The protein operates within cell wall biogenesis; peptidoglycan biosynthesis. Functionally, cell wall formation. Catalyzes the addition of L-glutamate to the nucleotide precursor UDP-N-acetylmuramoyl-L-alanine. This is UDP-N-acetylmuramoyl-L-alanine--L-glutamate ligase from Xylella fastidiosa (strain 9a5c).